A 153-amino-acid chain; its full sequence is MAPKAEKKPAAKKPAEEEPAAEKAEKAPAGKKPKAEKRLPAGKAEKGSGEGKKAGRKKAKKSVETYKIYIFKVLKQVHPDIGISSKAMSIMNSFINDIFEKLAGESAKLARYNKKPTITSREIQTSVRLVLPGELAKHAVSEGTKAVTKFTSA.

Composition is skewed to basic and acidic residues over residues 1–28 (MAPK…EKAP) and 36–53 (EKRL…EGKK). Residues 1–61 (MAPKAEKKPA…KKAGRKKAKK (61 aa)) form a disordered region. An N6-acetyllysine mark is found at Lys-7 and Lys-37. A Glycyl lysine isopeptide (Lys-Gly) (interchain with G-Cter in ubiquitin) cross-link involves residue Lys-149.

Belongs to the histone H2B family. In terms of assembly, the nucleosome is a histone octamer containing two molecules each of H2A, H2B, H3 and H4 assembled in one H3-H4 heterotetramer and two H2A-H2B heterodimers. The octamer wraps approximately 147 bp of DNA. Post-translationally, can be acetylated to form H2BK6ac and H2BK33ac. Monoubiquitinated by BRE1 to form H2BK143ub1 and deubiquitinated by UBP26. Required for heterochromatic histone H3 di- and trimethylation at H3K4me. May give a specific tag for epigenetic transcriptional activation.

It localises to the nucleus. Its subcellular location is the chromosome. In terms of biological role, core component of nucleosome. Nucleosomes wrap and compact DNA into chromatin, limiting DNA accessibility to the cellular machineries which require DNA as a template. Histones thereby play a central role in transcription regulation, DNA repair, DNA replication and chromosomal stability. DNA accessibility is regulated via a complex set of post-translational modifications of histones, also called histone code, and nucleosome remodeling. The chain is Histone H2B.4 (H2B.4) from Oryza sativa subsp. indica (Rice).